We begin with the raw amino-acid sequence, 193 residues long: Xanthine phosphoribosyltransferase (193 aa).

The xanthine site is built by leucine 20 and threonine 27. Position 128 to 132 (alanine 128 to alanine 132) interacts with 5-phospho-alpha-D-ribose 1-diphosphate. Lysine 156 contacts xanthine.

It belongs to the purine/pyrimidine phosphoribosyltransferase family. Xpt subfamily. In terms of assembly, homodimer.

The protein resides in the cytoplasm. It carries out the reaction XMP + diphosphate = xanthine + 5-phospho-alpha-D-ribose 1-diphosphate. It functions in the pathway purine metabolism; XMP biosynthesis via salvage pathway; XMP from xanthine: step 1/1. Functionally, converts the preformed base xanthine, a product of nucleic acid breakdown, to xanthosine 5'-monophosphate (XMP), so it can be reused for RNA or DNA synthesis. The chain is Xanthine phosphoribosyltransferase from Streptococcus pyogenes serotype M5 (strain Manfredo).